The primary structure comprises 128 residues: Probable 4-amino-4-deoxy-L-arabinose-phosphoundecaprenol flippase subunit ArnF (128 aa).

Over methionine 1–glycine 2 the chain is Cytoplasmic. A helical membrane pass occupies residues leucine 3–alanine 23. The Periplasmic segment spans residues alanine 24–aspartate 35. Residues phenylalanine 36–glycine 56 traverse the membrane as a helical segment. Topologically, residues tyrosine 57–alanine 76 are cytoplasmic. Residues tyrosine 77 to tryptophan 97 traverse the membrane as a helical segment. Residues glutamate 98–threonine 100 are Periplasmic-facing. The chain crosses the membrane as a helical span at residues phenylalanine 101–leucine 121. Topologically, residues proline 122–tyrosine 128 are cytoplasmic.

It belongs to the ArnF family. As to quaternary structure, heterodimer of ArnE and ArnF.

It is found in the cell inner membrane. It functions in the pathway bacterial outer membrane biogenesis; lipopolysaccharide biosynthesis. Translocates 4-amino-4-deoxy-L-arabinose-phosphoundecaprenol (alpha-L-Ara4N-phosphoundecaprenol) from the cytoplasmic to the periplasmic side of the inner membrane. The sequence is that of Probable 4-amino-4-deoxy-L-arabinose-phosphoundecaprenol flippase subunit ArnF from Shigella sonnei (strain Ss046).